The sequence spans 170 residues: Putative beta-eliminating lyase-like protein (170 aa).

Lys-32 carries the N6-(pyridoxal phosphate)lysine modification.

It belongs to the beta-eliminating lyase family. It depends on pyridoxal 5'-phosphate as a cofactor.

This chain is Putative beta-eliminating lyase-like protein, found in Dictyostelium discoideum (Social amoeba).